The sequence spans 359 residues: Guanine nucleotide-binding protein G(q) subunit alpha (359 aa).

2 S-palmitoyl cysteine lipidation sites follow: Cys-9 and Cys-10. One can recognise a G-alpha domain in the interval 38–359 (RELKLLLLGT…QLNLKEYNLV (322 aa)). The segment at 41–54 (KLLLLGTGESGKST) is G1 motif. Ser-50, Gly-51, Lys-52, Ser-53, Thr-54, Ser-156, Leu-180, Arg-181, and Arg-183 together coordinate GTP. Ser-53 contacts Mg(2+). A G2 motif region spans residues 178–186 (DVLRVRVPT). Thr-186 is a binding site for Mg(2+). Positions 201 to 210 (FRMVDVGGQR) are G3 motif. Gln-209 carries the 5-glutamyl histamine modification. Positions 270-277 (ILFLNKKD) are G4 motif. GTP is bound by residues Asn-274, Lys-275, Asp-277, and Ala-331. A G5 motif region spans residues 329 to 334 (TCATDT).

It belongs to the G-alpha family. G(q) subfamily. In terms of assembly, g proteins are composed of 3 units; alpha, beta and gamma. The alpha chain contains the guanine nucleotide binding site. Interacts (GDP-bound form) with RIC8A (via C-terminus); promoting GNAQ folding and association with the plasma membrane. Binds NHERF1. Forms a complex with PECAM1 and BDKRB2. Interacts with GAS2L2. In terms of processing, palmitoylated by ZDHHC3 and ZDHHC7. Palmitoylation occurs in the Golgi and participates in the localization of GNAQ to the plasma membrane. Post-translationally, histaminylated at Gln-209 residues by TGM2.

The protein localises to the cell membrane. Its subcellular location is the golgi apparatus. It localises to the nucleus. It is found in the nucleus membrane. The enzyme catalyses GTP + H2O = GDP + phosphate + H(+). Its function is as follows. Guanine nucleotide-binding proteins (G proteins) function as transducers downstream of G protein-coupled receptors (GPCRs) in numerous signaling cascades. The alpha chain contains the guanine nucleotide binding site and alternates between an active, GTP-bound state and an inactive, GDP-bound state. Signaling by an activated GPCR promotes GDP release and GTP binding. The alpha subunit has a low GTPase activity that converts bound GTP to GDP, thereby terminating the signal. Both GDP release and GTP hydrolysis are modulated by numerous regulatory proteins. Signaling is mediated via phospholipase C-beta-dependent inositol lipid hydrolysis for signal propagation: activates phospholipase C-beta: following GPCR activation, GNAQ activates PLC-beta (PLCB1, PLCB2, PLCB3 or PLCB4), leading to production of diacylglycerol (DAG) and inositol 1,4,5-trisphosphate (IP3). Required for platelet activation. Regulates B-cell selection and survival and is required to prevent B-cell-dependent autoimmunity. Regulates chemotaxis of BM-derived neutrophils and dendritic cells (in vitro). Transduces FFAR4 signaling in response to long-chain fatty acids (LCFAs). Together with GNA11, required for heart development. The sequence is that of Guanine nucleotide-binding protein G(q) subunit alpha (Gnaq) from Rattus norvegicus (Rat).